The chain runs to 98 residues: Large ribosomal subunit protein uL23 (98 aa).

This sequence belongs to the universal ribosomal protein uL23 family. Part of the 50S ribosomal subunit. Contacts protein L29, and trigger factor when it is bound to the ribosome.

One of the early assembly proteins it binds 23S rRNA. One of the proteins that surrounds the polypeptide exit tunnel on the outside of the ribosome. Forms the main docking site for trigger factor binding to the ribosome. In Dinoroseobacter shibae (strain DSM 16493 / NCIMB 14021 / DFL 12), this protein is Large ribosomal subunit protein uL23.